Consider the following 133-residue polypeptide: uncharacterized protein (133 aa).

This is an uncharacterized protein from Methanothermobacter marburgensis (strain ATCC BAA-927 / DSM 2133 / JCM 14651 / NBRC 100331 / OCM 82 / Marburg) (Methanobacterium thermoautotrophicum).